The primary structure comprises 919 residues: Valine--tRNA ligase (919 aa).

Positions 66–76 (PNVTGQLHMGH) match the 'HIGH' region motif. Positions 562 to 566 (KMSKS) match the 'KMSKS' region motif. Lysine 565 serves as a coordination point for ATP. Residues 852-919 (TVDKEAERKR…RISARLEELK (68 aa)) are a coiled coil.

Belongs to the class-I aminoacyl-tRNA synthetase family. ValS type 1 subfamily. Monomer.

It localises to the cytoplasm. It catalyses the reaction tRNA(Val) + L-valine + ATP = L-valyl-tRNA(Val) + AMP + diphosphate. In terms of biological role, catalyzes the attachment of valine to tRNA(Val). As ValRS can inadvertently accommodate and process structurally similar amino acids such as threonine, to avoid such errors, it has a 'posttransfer' editing activity that hydrolyzes mischarged Thr-tRNA(Val) in a tRNA-dependent manner. In Corynebacterium diphtheriae (strain ATCC 700971 / NCTC 13129 / Biotype gravis), this protein is Valine--tRNA ligase.